A 706-amino-acid chain; its full sequence is ABC transporter D family member 2, chloroplastic (706 aa).

The transit peptide at 1 to 44 (MILMITAPVCPPHLLLRHSSLLRHESSIGNFHRKKNPRFRTVSC) directs the protein to the chloroplast. Serine 45 is modified (N-acetylserine). Transmembrane regions (helical) follow at residues 88-108 (LAAV…FNFL), 124-144 (FTKQ…FFVL), 200-222 (TALS…SNIL), 237-257 (SFGG…LNFL), and 326-346 (ILPV…FGVI). Residues 88–372 (LAAVFALTLA…VVYQFQAISS (285 aa)) enclose the ABC transmembrane type-1 domain. Residues 430–697 (LEIEELTLQT…DAQDSLYGRL (268 aa)) enclose the ABC transporter domain. Residue 464–471 (GPSGSGKT) participates in ATP binding. Residues 545 to 569 (TTPGGSNIDGSPPLLIREDGNEKPT) form a disordered region. The span at 560-569 (IREDGNEKPT) shows a compositional bias: basic and acidic residues.

It belongs to the ABC transporter superfamily. ABCD family. Peroxisomal fatty acyl CoA transporter (TC 3.A.1.203) subfamily. In terms of assembly, homodimer or heterodimer.

It is found in the membrane. The protein resides in the plastid. Its subcellular location is the chloroplast. The polypeptide is ABC transporter D family member 2, chloroplastic (ABCC2) (Arabidopsis thaliana (Mouse-ear cress)).